Reading from the N-terminus, the 549-residue chain is DDB1- and CUL4-associated factor 11 (549 aa).

The span at Met1 to Gly24 shows a compositional bias: low complexity. The interval Met1 to Val40 is disordered. Phosphoserine is present on residues Ser73 and Ser75. The span at Asp80–Asp89 shows a compositional bias: basic and acidic residues. The interval Asp80–Asp100 is disordered. WD repeat units follow at residues Thr170–Lys210, Asp216–Asp258, Glu263–Gln302, Ser305–Pro345, Gly353–Gly392, Gly435–Thr480, and Asn481–Asp520.

Interacts with DDB1 and CUL4A.

It functions in the pathway protein modification; protein ubiquitination. In terms of biological role, may function as a substrate receptor for CUL4-DDB1 E3 ubiquitin-protein ligase complex. This Rattus norvegicus (Rat) protein is DDB1- and CUL4-associated factor 11 (Dcaf11).